The primary structure comprises 163 residues: MSDWCYLNSEEKDKLIDKLYKKLIKKGRVVCEVSDIRHRIYKRLEYNGHKFERKIIGYEPGVISLSREHNTELEWNLWKIAGWINSKRITKEELELACETHNMMYPKRKVKVSSIEEAFDGELSIGQIYYLIQDKWKKVVDKNPNPFDYCNLRDTIVKIKLVK.

Belongs to the mimivirus L242/L243 family.

This is an uncharacterized protein from Acanthamoeba polyphaga (Amoeba).